Here is a 446-residue protein sequence, read N- to C-terminus: 3-phosphoshikimate 1-carboxyvinyltransferase (446 aa).

3-phosphoshikimate contacts are provided by Lys35, Ser36, and Arg40. Lys35 lines the phosphoenolpyruvate pocket. Phosphoenolpyruvate-binding residues include Gly108 and Arg137. The 3-phosphoshikimate site is built by Ser182, Gln184, Asp332, and Lys359. Gln184 lines the phosphoenolpyruvate pocket. Catalysis depends on Asp332, which acts as the Proton acceptor. Positions 363 and 405 each coordinate phosphoenolpyruvate.

The protein belongs to the EPSP synthase family. In terms of assembly, monomer.

Its subcellular location is the cytoplasm. The enzyme catalyses 3-phosphoshikimate + phosphoenolpyruvate = 5-O-(1-carboxyvinyl)-3-phosphoshikimate + phosphate. Its pathway is metabolic intermediate biosynthesis; chorismate biosynthesis; chorismate from D-erythrose 4-phosphate and phosphoenolpyruvate: step 6/7. Catalyzes the transfer of the enolpyruvyl moiety of phosphoenolpyruvate (PEP) to the 5-hydroxyl of shikimate-3-phosphate (S3P) to produce enolpyruvyl shikimate-3-phosphate and inorganic phosphate. The chain is 3-phosphoshikimate 1-carboxyvinyltransferase from Acaryochloris marina (strain MBIC 11017).